A 280-amino-acid polypeptide reads, in one-letter code: Type 1 encapsulin shell protein (280 aa).

The protein belongs to the encapsulin family. Family 1 subfamily. As to quaternary structure, this encapsulin nanocompartment is formed by 60 subunits; monomers form pentamers which assemble to form shells. There are 12 pores where the pentamers meet as well as 3-fold axis channels and dimer channels; none are larger than 3-4 Angstroms in diameter. The N-terminus of the protein is inside the shell, the C-terminus is outside.

The protein resides in the encapsulin nanocompartment. In terms of biological role, shell component of a type 1 encapsulin nanocompartment. Assembles into proteinaceous icosahedral shells 24 nm in diameter in the presence and absence of its ferritin cargo protein. The center of cargo-loaded nanocompartments is loaded with iron. The empty encapsulin nanocompartment sequesters about 2200 Fe ions while the cargo-loaded nanocompartment can maximally sequester about 4150 Fe ions. Does not have any detectable ferroxidase activity. The sequence is that of Type 1 encapsulin shell protein from Rhodospirillum rubrum (strain ATCC 11170 / ATH 1.1.1 / DSM 467 / LMG 4362 / NCIMB 8255 / S1).